A 164-amino-acid polypeptide reads, in one-letter code: Class I hydrophobin rodA (164 aa).

The N-terminal stretch at 1 to 18 is a signal peptide; the sequence is MQFSISALVLGLAATVYA. N-linked (GlcNAc...) asparagine glycosylation is present at asparagine 50. 4 disulfide bridges follow: cysteine 60-cysteine 138, cysteine 68-cysteine 132, cysteine 69-cysteine 109, and cysteine 139-cysteine 157.

Belongs to the fungal hydrophobin family. In terms of assembly, self-assembles to form functional amyloid fibrils called rodlets. Self-assembly into fibrillar rodlets occurs spontaneously at hydrophobic:hydrophilic interfaces and the rodlets further associate laterally to form amphipathic monolayers.

It is found in the secreted. The protein resides in the cell wall. In terms of biological role, aerial growth, conidiation, and dispersal of filamentous fungi in the environment rely upon a capability of their secreting small amphipathic proteins called hydrophobins (HPBs) with low sequence identity. Class I can self-assemble into an outermost layer of rodlet bundles on aerial cell surfaces, conferring cellular hydrophobicity that supports fungal growth, development and dispersal; whereas Class II form highly ordered films at water-air interfaces through intermolecular interactions but contribute nothing to the rodlet structure. RodA is a class I hydrophobin involved in the cell surface hydrophobicity. The surface rodlet layer of the conidial cell wall makes airborne conidia of filamentous fungi inert to both innate and adaptive immunity. This Penicillium camemberti (strain FM 013) protein is Class I hydrophobin rodA.